The chain runs to 504 residues: uncharacterized protein (504 aa).

Residues 6-26 (NLFIIFIFLFLLSQVSAYITF) traverse the membrane as a helical segment.

It to M.jannaschii MJ1506 and MJ1561.

It localises to the membrane. This is an uncharacterized protein from Methanocaldococcus jannaschii (strain ATCC 43067 / DSM 2661 / JAL-1 / JCM 10045 / NBRC 100440) (Methanococcus jannaschii).